We begin with the raw amino-acid sequence, 176 residues long: Peptide methionine sulfoxide reductase MsrA (176 aa).

Cys-10 is a catalytic residue.

Belongs to the MsrA Met sulfoxide reductase family.

It catalyses the reaction L-methionyl-[protein] + [thioredoxin]-disulfide + H2O = L-methionyl-(S)-S-oxide-[protein] + [thioredoxin]-dithiol. The catalysed reaction is [thioredoxin]-disulfide + L-methionine + H2O = L-methionine (S)-S-oxide + [thioredoxin]-dithiol. In terms of biological role, has an important function as a repair enzyme for proteins that have been inactivated by oxidation. Catalyzes the reversible oxidation-reduction of methionine sulfoxide in proteins to methionine. The sequence is that of Peptide methionine sulfoxide reductase MsrA from Leptospira borgpetersenii serovar Hardjo-bovis (strain L550).